The primary structure comprises 95 residues: Citrate lyase acyl carrier protein (95 aa).

Residue Ser-14 is modified to O-(phosphoribosyl dephospho-coenzyme A)serine.

This sequence belongs to the CitD family. In terms of assembly, oligomer with a subunit composition of (alpha,beta,gamma)6.

Its subcellular location is the cytoplasm. Its function is as follows. Covalent carrier of the coenzyme of citrate lyase. The chain is Citrate lyase acyl carrier protein from Haemophilus influenzae (strain 86-028NP).